Here is a 634-residue protein sequence, read N- to C-terminus: 1-deoxy-D-xylulose-5-phosphate synthase (634 aa).

Residues histidine 74 and 115–117 (AHS) each bind thiamine diphosphate. A Mg(2+)-binding site is contributed by aspartate 146. Thiamine diphosphate contacts are provided by residues 147-148 (GA), asparagine 176, tyrosine 283, and glutamate 365. Residue asparagine 176 coordinates Mg(2+).

This sequence belongs to the transketolase family. DXPS subfamily. Homodimer. Requires Mg(2+) as cofactor. It depends on thiamine diphosphate as a cofactor.

The catalysed reaction is D-glyceraldehyde 3-phosphate + pyruvate + H(+) = 1-deoxy-D-xylulose 5-phosphate + CO2. The protein operates within metabolic intermediate biosynthesis; 1-deoxy-D-xylulose 5-phosphate biosynthesis; 1-deoxy-D-xylulose 5-phosphate from D-glyceraldehyde 3-phosphate and pyruvate: step 1/1. Its function is as follows. Catalyzes the acyloin condensation reaction between C atoms 2 and 3 of pyruvate and glyceraldehyde 3-phosphate to yield 1-deoxy-D-xylulose-5-phosphate (DXP). This is 1-deoxy-D-xylulose-5-phosphate synthase from Burkholderia lata (strain ATCC 17760 / DSM 23089 / LMG 22485 / NCIMB 9086 / R18194 / 383).